A 394-amino-acid polypeptide reads, in one-letter code: MNDSNRLRLTWISYFSYALTGALVIVTGMVMGNIAEYFNLPVSSMSNTFTFLNAGILISIFLNAWLMEIIPLKRQLMFGFVLMVLAIAGLMLGKSLTMFSLCMFILGVVSGITMSIGTFLITHMYAGRQRGSRLLFTDSFFSMAGMIFPIVAAMLLARQIGWYWVYACIGLLYVGIFVLTLFSEFPVLGNKGADAGQPVVKEKWGIGVLFLSIAALCYILGQLGFIQWVPEYATKSFGMDISQAGKLVSDFWTSYMIGMWVFSFILRFFDLQRIVTILAALATGAMYLFVSTDNPEHLSYYIMALGFVSSAIYTTLITLGSLQTKVSSPKLVNFILTCGTIGTMLTFVVTGPIVAKGGAHAALTTANGLYLAVFVMCLLLGFVTKHRSHGHVTH.

A run of 12 helical transmembrane segments spans residues 11 to 31 (WISYFSYALTGALVIVTGMVM), 51 to 71 (FLNAGILISIFLNAWLMEIIP), 76 to 96 (LMFGFVLMVLAIAGLMLGKSL), 101 to 121 (LCMFILGVVSGITMSIGTFLI), 134 to 154 (LLFTDSFFSMAGMIFPIVAAM), 162 to 182 (WYWVYACIGLLYVGIFVLTLF), 206 to 226 (IGVLFLSIAALCYILGQLGFI), 251 to 271 (FWTSYMIGMWVFSFILRFFDL), 274 to 294 (IVTILAALATGAMYLFVSTDN), 302 to 322 (IMALGFVSSAIYTTLITLGSL), 334 to 354 (FILTCGTIGTMLTFVVTGPIV), and 363 to 383 (LTTANGLYLAVFVMCLLLGFV).

It belongs to the major facilitator superfamily. TsgA family.

The protein localises to the cell inner membrane. In Serratia proteamaculans (strain 568), this protein is Protein TsgA homolog.